A 261-amino-acid polypeptide reads, in one-letter code: SLA class II histocompatibility antigen, DQ haplotype C beta chain (261 aa).

The signal sequence occupies residues 1–31; sequence MSGMVALRLPRGLWTAALTVMLVVLGAPVAE. Residues 32–126 form a beta-1 region; that stretch reads GRDSPQDFVF…IEEGTTLQRR (95 aa). Over 32 to 230 the chain is Extracellular; the sequence is GRDSPQDFVF…RAQSESAQSK (199 aa). 2 disulfides stabilise this stretch: Cys47/Cys111 and Cys149/Cys205. Asn51 carries an N-linked (GlcNAc...) asparagine glycan. A beta-2 region spans residues 127–220; sequence VQPTVTISPS…SLQNPILVEW (94 aa). In terms of domain architecture, Ig-like C1-type spans 129–233; the sequence is PTVTISPSKA…SESAQSKMLS (105 aa). The connecting peptide stretch occupies residues 221–230; it reads RAQSESAQSK. A helical transmembrane segment spans residues 231–251; the sequence is MLSGVGGFVLGLIFLGLGLFI. Residues 252-261 lie on the Cytoplasmic side of the membrane; the sequence is RHRSQKGLVR.

It belongs to the MHC class II family.

It localises to the membrane. The polypeptide is SLA class II histocompatibility antigen, DQ haplotype C beta chain (Sus scrofa (Pig)).